The following is a 41-amino-acid chain: SPbeta prophage-derived uncharacterized protein YosF (41 aa).

The protein is SPbeta prophage-derived uncharacterized protein YosF (yosF) of Bacillus subtilis (strain 168).